The primary structure comprises 231 residues: NADH-ubiquinone oxidoreductase chain 4 (231 aa).

7 helical membrane-spanning segments follow: residues 1 to 21 (PIAGSMVLAAILLKLGGYGII), 34 to 54 (MFLPFIVLALWGAILANLTCL), 63 to 85 (IAYSSVSHMGLVAAAIIIQTPWG), 89 to 111 (AMALMIAHGFTSSALFCLANTTY), 128 to 148 (ILPMTSTWWLLANLMNIATPP), 169 to 189 (TIILLGLSMLITASYSLHMFL), and 211 to 231 (LLMTLHLIPLMMISMKPELVI).

The protein belongs to the complex I subunit 4 family.

Its subcellular location is the mitochondrion membrane. The enzyme catalyses a ubiquinone + NADH + 5 H(+)(in) = a ubiquinol + NAD(+) + 4 H(+)(out). Functionally, core subunit of the mitochondrial membrane respiratory chain NADH dehydrogenase (Complex I) that is believed to belong to the minimal assembly required for catalysis. Complex I functions in the transfer of electrons from NADH to the respiratory chain. The immediate electron acceptor for the enzyme is believed to be ubiquinone. In Porthidium ophryomegas (Slender hognose viper), this protein is NADH-ubiquinone oxidoreductase chain 4 (MT-ND4).